A 290-amino-acid chain; its full sequence is Pantothenate synthetase (290 aa).

34–41 (MGNLHDGH) lines the ATP pocket. Residue His41 is the Proton donor of the active site. Gln65 contributes to the (R)-pantoate binding site. Gln65 is a binding site for beta-alanine. 156 to 159 (GKKD) provides a ligand contact to ATP. Gln162 is a binding site for (R)-pantoate. Residues Ala185 and 193–196 (LSSR) each bind ATP.

It belongs to the pantothenate synthetase family. In terms of assembly, homodimer.

The protein localises to the cytoplasm. It carries out the reaction (R)-pantoate + beta-alanine + ATP = (R)-pantothenate + AMP + diphosphate + H(+). Its pathway is cofactor biosynthesis; (R)-pantothenate biosynthesis; (R)-pantothenate from (R)-pantoate and beta-alanine: step 1/1. In terms of biological role, catalyzes the condensation of pantoate with beta-alanine in an ATP-dependent reaction via a pantoyl-adenylate intermediate. This chain is Pantothenate synthetase, found in Acidovorax ebreus (strain TPSY) (Diaphorobacter sp. (strain TPSY)).